The chain runs to 267 residues: Auxin-responsive protein IAA18 (267 aa).

Positions 42–46 (LELKL) match the EAR-like (transcriptional repression) motif. Positions 81-101 (PSSTKTTSHKRTAPGPVVGWP) are disordered. A PB1 domain is found at 149–248 (GMFVKINMYG…SVKRLRVIKT (100 aa)).

Belongs to the Aux/IAA family. In terms of assembly, homodimers and heterodimers. Interacts with TPL.

It is found in the nucleus. In terms of biological role, aux/IAA proteins are short-lived transcriptional factors that function as repressors of early auxin response genes at low auxin concentrations. Repression is thought to result from the interaction with auxin response factors (ARFs), proteins that bind to the auxin-responsive promoter element (AuxRE). Formation of heterodimers with ARF proteins may alter their ability to modulate early auxin response genes expression. This Arabidopsis thaliana (Mouse-ear cress) protein is Auxin-responsive protein IAA18 (IAA18).